The sequence spans 205 residues: MKLRGLYAITDSQLLTGKFLSYVEAALDGGVTLLQYRDKTGDDSRRLREATELLKLCERYKTRLIINDDAELAARLGVGVHLGQTDGSLPDARALLGHKAIVGATCHGQLELAEQAKADGATYVAFGRFFNSQTKPGAPAVPLDLIAQVRARVHLPIAVIGGITLENAPQLVEHGADLLAVVHGLFGAETPQEVTRRAKAFMALL.

4-amino-2-methyl-5-(diphosphooxymethyl)pyrimidine is bound by residues 35–39 (QYRDK) and Asn67. Residues Asp68 and Asp86 each contribute to the Mg(2+) site. A 4-amino-2-methyl-5-(diphosphooxymethyl)pyrimidine-binding site is contributed by Thr105. Residue 132–134 (SQT) coordinates 2-[(2R,5Z)-2-carboxy-4-methylthiazol-5(2H)-ylidene]ethyl phosphate. Position 135 (Lys135) interacts with 4-amino-2-methyl-5-(diphosphooxymethyl)pyrimidine. Gly162 lines the 2-[(2R,5Z)-2-carboxy-4-methylthiazol-5(2H)-ylidene]ethyl phosphate pocket.

This sequence belongs to the thiamine-phosphate synthase family. Mg(2+) is required as a cofactor.

The catalysed reaction is 2-[(2R,5Z)-2-carboxy-4-methylthiazol-5(2H)-ylidene]ethyl phosphate + 4-amino-2-methyl-5-(diphosphooxymethyl)pyrimidine + 2 H(+) = thiamine phosphate + CO2 + diphosphate. It carries out the reaction 2-(2-carboxy-4-methylthiazol-5-yl)ethyl phosphate + 4-amino-2-methyl-5-(diphosphooxymethyl)pyrimidine + 2 H(+) = thiamine phosphate + CO2 + diphosphate. It catalyses the reaction 4-methyl-5-(2-phosphooxyethyl)-thiazole + 4-amino-2-methyl-5-(diphosphooxymethyl)pyrimidine + H(+) = thiamine phosphate + diphosphate. It functions in the pathway cofactor biosynthesis; thiamine diphosphate biosynthesis; thiamine phosphate from 4-amino-2-methyl-5-diphosphomethylpyrimidine and 4-methyl-5-(2-phosphoethyl)-thiazole: step 1/1. Its function is as follows. Condenses 4-methyl-5-(beta-hydroxyethyl)thiazole monophosphate (THZ-P) and 2-methyl-4-amino-5-hydroxymethyl pyrimidine pyrophosphate (HMP-PP) to form thiamine monophosphate (TMP). The protein is Thiamine-phosphate synthase of Pseudomonas syringae pv. tomato (strain ATCC BAA-871 / DC3000).